We begin with the raw amino-acid sequence, 602 residues long: Probable pectinesterase/pectinesterase inhibitor 64 (602 aa).

Residues 36–56 (ILIIIAASCILLLLISLLIYA) form a helical membrane-spanning segment. Positions 62 to 91 (SRNHHNPSHQTPTSDDHPPPETPPSPPPIA) are disordered. Pro residues predominate over residues 81-90 (PETPPSPPPI). A pectinesterase inhibitor 64 region spans residues 87–237 (PPPIAQIRLA…VNLTGNALSM (151 aa)). Residues N98, N156, N212, N229, and N315 are each glycosylated (N-linked (GlcNAc...) asparagine). Residues 288–595 (DVTVCKNGGK…YSVANFIQAD (308 aa)) are pectinesterase 64. 2 residues coordinate substrate: T367 and Q397. The active-site Proton donor; for pectinesterase activity is the D420. An intrachain disulfide couples C434 to C454. D441 serves as the catalytic Nucleophile; for pectinesterase activity. N-linked (GlcNAc...) asparagine glycans are attached at residues N492 and N496. 2 residues coordinate substrate: R518 and W520.

It in the N-terminal section; belongs to the PMEI family. The protein in the C-terminal section; belongs to the pectinesterase family. Expressed in siliques.

The protein localises to the membrane. It catalyses the reaction [(1-&gt;4)-alpha-D-galacturonosyl methyl ester](n) + n H2O = [(1-&gt;4)-alpha-D-galacturonosyl](n) + n methanol + n H(+). Its pathway is glycan metabolism; pectin degradation; 2-dehydro-3-deoxy-D-gluconate from pectin: step 1/5. Functionally, acts in the modification of cell walls via demethylesterification of cell wall pectin. The protein is Probable pectinesterase/pectinesterase inhibitor 64 (PME64) of Arabidopsis thaliana (Mouse-ear cress).